A 362-amino-acid chain; its full sequence is Photosystem II protein D1 3 (362 aa).

The next 3 helical transmembrane spans lie at 29-46, 118-133, and 142-156; these read YVGW…SATI, HFLI…EWEL, and WICI…AATA. Position 118 (His118) interacts with chlorophyll a. Tyr126 provides a ligand contact to pheophytin a. [CaMn4O5] cluster is bound by residues Asp170 and Glu189. The chain crosses the membrane as a helical span at residues 197–218; that stretch reads FHMLGVAGVFGGALISAMHGSL. Position 198 (His198) interacts with chlorophyll a. A quinone is bound by residues His215 and 264–265; that span reads AF. His215 serves as a coordination point for Fe cation. His274 contributes to the Fe cation binding site. Residues 276 to 290 form a helical membrane-spanning segment; that stretch reads IMAAFPVIGIWFTSL. [CaMn4O5] cluster contacts are provided by His334, Glu335, Asp344, and Ala346. A propeptide spanning residues 347 to 362 is cleaved from the precursor; the sequence is GTESAPVAVSTAKVGG.

Belongs to the reaction center PufL/M/PsbA/D family. PSII is composed of 1 copy each of membrane proteins PsbA, PsbB, PsbC, PsbD, PsbE, PsbF, PsbH, PsbI, PsbJ, PsbK, PsbL, PsbM, PsbT, PsbX, Psb30/Ycf12, peripheral proteins PsbO, CyanoQ (PsbQ), PsbU, PsbV and a large number of cofactors. It forms dimeric complexes. The D1/D2 heterodimer binds P680, chlorophylls that are the primary electron donor of PSII, and subsequent electron acceptors. It shares a non-heme iron and each subunit binds pheophytin, quinone, additional chlorophylls, carotenoids and lipids. D1 provides most of the ligands for the Mn4-Ca-O5 cluster of the oxygen-evolving complex (OEC). There is also a Cl(-1) ion associated with D1 and D2, which is required for oxygen evolution. The PSII complex binds additional chlorophylls, carotenoids and specific lipids. serves as cofactor. Tyr-161 forms a radical intermediate that is referred to as redox-active TyrZ, YZ or Y-Z. In terms of processing, C-terminally processed by CtpA; processing is essential to allow assembly of the oxygen-evolving complex and thus photosynthetic growth.

It localises to the cell inner membrane. It carries out the reaction 2 a plastoquinone + 4 hnu + 2 H2O = 2 a plastoquinol + O2. Functionally, photosystem II (PSII) is a light-driven water:plastoquinone oxidoreductase that uses light energy to abstract electrons from H(2)O, generating O(2) and a proton gradient subsequently used for ATP formation. It consists of a core antenna complex that captures photons, and an electron transfer chain that converts photonic excitation into a charge separation. The D1/D2 (PsbA/PsbD) reaction center heterodimer binds P680, the primary electron donor of PSII as well as several subsequent electron acceptors. The chain is Photosystem II protein D1 3 from Gloeobacter violaceus (strain ATCC 29082 / PCC 7421).